The following is a 309-amino-acid chain: Ferredoxin--NADP reductase (309 aa).

Residues D25, Q33, Y38, V77, F107, D267, and T307 each contribute to the FAD site.

It belongs to the ferredoxin--NADP reductase type 2 family. As to quaternary structure, homodimer. FAD serves as cofactor.

It catalyses the reaction 2 reduced [2Fe-2S]-[ferredoxin] + NADP(+) + H(+) = 2 oxidized [2Fe-2S]-[ferredoxin] + NADPH. This Lactobacillus acidophilus (strain ATCC 700396 / NCK56 / N2 / NCFM) protein is Ferredoxin--NADP reductase.